A 432-amino-acid chain; its full sequence is Adenylosuccinate synthetase (432 aa).

GTP-binding positions include 16 to 22 (GDEGKGK) and 44 to 46 (GHM). Catalysis depends on D17, which acts as the Proton acceptor. Residues D17 and G44 each coordinate Mg(2+). IMP contacts are provided by residues 17-20 (DEGK), 42-45 (NAGH), T132, R146, Q226, T241, and R305. H45 acts as the Proton donor in catalysis. 301–307 (LNTGRPR) contacts substrate. GTP is bound by residues R307, 333–335 (LFD), and 415–417 (SVG).

This sequence belongs to the adenylosuccinate synthetase family. As to quaternary structure, homodimer. The cofactor is Mg(2+).

It localises to the cytoplasm. It carries out the reaction IMP + L-aspartate + GTP = N(6)-(1,2-dicarboxyethyl)-AMP + GDP + phosphate + 2 H(+). The protein operates within purine metabolism; AMP biosynthesis via de novo pathway; AMP from IMP: step 1/2. Plays an important role in the de novo pathway of purine nucleotide biosynthesis. Catalyzes the first committed step in the biosynthesis of AMP from IMP. This chain is Adenylosuccinate synthetase, found in Mycoplasma mycoides subsp. mycoides SC (strain CCUG 32753 / NCTC 10114 / PG1).